A 417-amino-acid polypeptide reads, in one-letter code: Oxidoreductase phnG (417 aa).

6-hydroxy-FAD-binding positions include 16 to 20 (GGSYA), R61, and D317.

It belongs to the FAD-dependent oxidoreductase family. 6-hydroxy-FAD serves as cofactor.

The catalysed reaction is deoxyherqueinone + NADPH + O2 + H(+) = herqueinone + NADP(+) + H2O. It participates in secondary metabolite biosynthesis. Oxidoreductase; part of the gene cluster that mediates the biosynthesis of phenalenones such as herqueinone, compounds that have been reported to treat tumors, bacterial infections and/or mycoses, and rheumatic diseases. The non-reducing polyketide synthase phnA synthesizes the heptaketide backbone and cyclizes it into the angular, hemiketal-containing naphtho-gamma-pyrone prephenalenone. The product template (PT) domain of phnA catalyzes only the C4-C9 aldol condensation, which is unprecedented among known PT domains. The transformation of prephenalenone to phenalenones requires an FAD-dependent monooxygenase phnB, which catalyzes the C2 aromatic hydroxylation of prephenalenone and ring opening of the gamma-pyrone ring simultaneously. Subsequent intramolecular deprotonation of C3 phenolic oxygen accelerates phenalenone ring closure to yield the tricyclic phenalenone core with a C2 hydroxylation. The prenyltransferase phnF further catalyzes reverse C-prenylation of phenalenone by direct electrophilic substitution at C6, or possibly via first a forward O-prenylation of a neighboring phenol in phenalenone, followed by a Claisen rearrangement. The hydroalkoxylation enzyme phnH catalyzes the 5-exo-trig cyclization via acid catalysis after the spontaneous deprotonation of 7-OH, which leads to the formation of the dihydrobenzofuran atrovenetin. Atrovenetin is further converted to deoxyherqueinone by the O-methyltransferase phnC which can methylate C2-OH to stabilize the northern portion of the phenalenone core. Finally, the oxidoreductase phnG converts deoxyherqueinone to herqueinone via C6 hydroxylation. The polypeptide is Oxidoreductase phnG (Penicillium herquei).